We begin with the raw amino-acid sequence, 990 residues long: Bacteriophage adsorption protein A (990 aa).

The first 27 residues, 1–27 (MKENNLNRVIGWSGLLLTSLLSTSALA), serve as a signal peptide directing secretion. 3 TPR repeats span residues 81-114 (IPLT…HPGD), 612-645 (ANAY…EPNN), and 646-679 (SNTQ…LPDD).

As to quaternary structure, (Microbial infection) Interacts with N4 phage non-contractile sheath protein; this interaction is essential for viral adsorption to the host.

It localises to the cell outer membrane. (Microbial infection) Allows N4 phage attachment by binding to the viral non-contractile sheath protein. The chain is Bacteriophage adsorption protein A (nfrA) from Escherichia coli (strain K12).